We begin with the raw amino-acid sequence, 137 residues long: Nucleoside diphosphate kinase (137 aa).

Positions 9, 58, 86, 92, 103, and 113 each coordinate ATP. The active-site Pros-phosphohistidine intermediate is the His-121.

The protein belongs to the NDK family. Homotetramer. Mg(2+) is required as a cofactor.

The protein localises to the cytoplasm. The catalysed reaction is a 2'-deoxyribonucleoside 5'-diphosphate + ATP = a 2'-deoxyribonucleoside 5'-triphosphate + ADP. The enzyme catalyses a ribonucleoside 5'-diphosphate + ATP = a ribonucleoside 5'-triphosphate + ADP. Functionally, major role in the synthesis of nucleoside triphosphates other than ATP. The ATP gamma phosphate is transferred to the NDP beta phosphate via a ping-pong mechanism, using a phosphorylated active-site intermediate. The protein is Nucleoside diphosphate kinase of Streptococcus pneumoniae (strain P1031).